The sequence spans 921 residues: Probable TonB-dependent receptor NMB1497 (921 aa).

Positions 1 to 25 are cleaved as a signal peptide; sequence MRSSFRLKPICFYLMGVTLYHYSYA. Residues 53–174 enclose the TBDR plug domain; it reads DKKVFTDARA…LAGSANLRTL (122 aa). The TBDR beta-barrel domain occupies 185 to 921; it reads TYGLLLKGLT…TFLMTMSYKF (737 aa). The TonB C-terminal box signature appears at 904-921; it reads LTNFARGRTFLMTMSYKF.

It belongs to the TonB-dependent receptor family.

The protein resides in the cell outer membrane. In terms of biological role, probable receptor, TonB-dependent. The polypeptide is Probable TonB-dependent receptor NMB1497 (Neisseria meningitidis serogroup B (strain ATCC BAA-335 / MC58)).